Here is a 207-residue protein sequence, read N- to C-terminus: Outer-membrane lipoprotein LolB (207 aa).

The signal sequence occupies residues 1–21 (MTLPDFRLIRLLPLASLVLTA). Cys22 carries the N-palmitoyl cysteine lipid modification. Cys22 carries the S-diacylglycerol cysteine lipid modification.

The protein belongs to the LolB family. Monomer.

Its subcellular location is the cell outer membrane. Its function is as follows. Plays a critical role in the incorporation of lipoproteins in the outer membrane after they are released by the LolA protein. The chain is Outer-membrane lipoprotein LolB from Citrobacter koseri (strain ATCC BAA-895 / CDC 4225-83 / SGSC4696).